Consider the following 127-residue polypeptide: MSKVQEILEAVKSLTVLELAELVKAFEEEFGVSAAAPVAVAAAPAAGAAAAAPAQEEKTEFDVILVSPGAQKVNVIKVVREITGLGLKESKDLVDGAPKPVKEKVSKADAEAIKAKLEEVGATVEIK.

This sequence belongs to the bacterial ribosomal protein bL12 family. In terms of assembly, homodimer. Part of the ribosomal stalk of the 50S ribosomal subunit. Forms a multimeric L10(L12)X complex, where L10 forms an elongated spine to which 2 to 4 L12 dimers bind in a sequential fashion. Binds GTP-bound translation factors.

In terms of biological role, forms part of the ribosomal stalk which helps the ribosome interact with GTP-bound translation factors. Is thus essential for accurate translation. This Carboxydothermus hydrogenoformans (strain ATCC BAA-161 / DSM 6008 / Z-2901) protein is Large ribosomal subunit protein bL12.